The primary structure comprises 312 residues: Mas-related G-protein coupled receptor member E (312 aa).

The Extracellular portion of the chain corresponds to 1–20 (MMEPREAGQHVGAANGAQED). A helical transmembrane segment spans residues 21–41 (VAFNLIILSLTEGLGLGGLLG). The Cytoplasmic segment spans residues 42-59 (NGAVLWLLSSNVYRNPFA). A helical transmembrane segment spans residues 60-80 (IYLLDVACADLIFLGCHMVAI). The Extracellular portion of the chain corresponds to 81 to 106 (VPDLLQGRLDFPGFVQTSLATLRFFC). A helical membrane pass occupies residues 107 to 127 (YIVGLSLLAAVSVEQCLAALF). Over 128 to 141 (PAWYSCRRPRHLTT) the chain is Cytoplasmic. Residues 142 to 162 (CVCALTWALCLLLHLLLSGAC) traverse the membrane as a helical segment. The Extracellular portion of the chain corresponds to 163–176 (TQFFGEPSRHLCRT). The chain crosses the membrane as a helical span at residues 177–197 (LWLVAAVLLALLCCTMCGASL). The Cytoplasmic segment spans residues 198 to 217 (MLLLRVERGPQRPPPRGFPG). A helical transmembrane segment spans residues 218 to 238 (LILLTVLLFLFCGLPFGIYWL). Residues 239-241 (SRN) are Extracellular-facing. Residues 242–262 (LLWYIPHYFYHFSFLMAAVHC) form a helical membrane-spanning segment. The Cytoplasmic segment spans residues 263 to 312 (AAKPVVYFCLGSAQGRRLPLRLVLQRALGDEAELGAVRETSRRGLVDIAA).

Belongs to the G-protein coupled receptor 1 family. Mas subfamily.

Its subcellular location is the cell membrane. Its function is as follows. Orphan receptor. May regulate nociceptor function and/or development, including the sensation or modulation of pain. In Homo sapiens (Human), this protein is Mas-related G-protein coupled receptor member E (MRGPRE).